Consider the following 524-residue polypeptide: Zinc finger protein 346 (524 aa).

7 consecutive Matrin-type zinc fingers follow at residues 34 to 64 (TQCK…KVRR), 92 to 126 (DRSK…LRLR), 162 to 192 (KFCK…QETK), 226 to 260 (GKGF…LMSM), 286 to 316 (FSCD…HLKS), 343 to 373 (FSCD…HLMS), and 400 to 430 (FSCD…QLMS). 8 residues coordinate Zn(2+): Cys36, Cys39, His52, His58, Cys97, Cys100, His113, and His119. Disordered stretches follow at residues 453–486 (SAGG…GSLP) and 494–513 (PLYP…TMSP). The span at 476–486 (PKGPSSFGSLP) shows a compositional bias: low complexity.

The protein localises to the nucleus. It is found in the cytoplasm. Functionally, binds preferentially to dsRNA, but also to RNA-DNA hybrids. The chain is Zinc finger protein 346 from Xenopus laevis (African clawed frog).